A 462-amino-acid polypeptide reads, in one-letter code: Multidrug resistance protein NorM (462 aa).

The next 11 membrane-spanning stretches (helical) occupy residues 56-76 (LAAGGLGANFFFVIVTVLQGV), 99-119 (IYWTGFVLSVLLAIPAVVALS), 147-167 (FAALGSLIGVGLMRAFLPAIG), 172-192 (LLWVSIGGIGVNAVLNYGLIH), 202-222 (FLGSAVATTITIWLTAFALIW), 247-267 (LIGIGWPVAITYGVESTLFLA), 280-300 (LAAHQIALNVASVAFMVPLAI), 325-345 (FVALGLGVAFMSLSGLVLILA), 361-381 (NAATVSLAASLLGIAAVFQIV), 402-422 (MLAATFGYWGIGFPTGYWLAF), and 430-450 (GLWWGLAAGLASVAVLMAWRF).

This sequence belongs to the multi antimicrobial extrusion (MATE) (TC 2.A.66.1) family.

It localises to the cell inner membrane. Functionally, multidrug efflux pump. Confers probably resistance to the cationic peptide polymyxin B (PMB). The polypeptide is Multidrug resistance protein NorM (norM) (Burkholderia vietnamiensis).